Consider the following 421-residue polypeptide: MDNRSPRSRGNMGPKPTPLKVRGDSHKIIKKPPLAPPHPQPQPPQTHQQEPSQSRPPPGPVNIYTVTPRIIHTHPNNFMTLVQRLTGQTSTSTTSSSSSSSTSEPKDTSTMVDTSHGLISPAARFAVTEKANISNELGTFVGGEGTMDQYYHHHHQEQPHQNRGFERPSFHHAGILSPGPYSLPSVSPDFFSTIGPTDPQEGTPYLIPSGDMHSYLSQDEDRGIPHSVKDTRSIGSAYDRYLQSMQTFFVPSEEAGPFNGVGMVRQGGSNMMPGPSMGELMAGCGGSLPSDFRPNGRDMGFGQLDSVGRPGREPHPLPPDVSNTLYVEGLPSNCSRREVSHIFRPFVGYREVRLVTQDSKHRSGDPTVLCFVDFENSACAATALSALQDYRMDEDEPDSKILRLQFFRNPGPRPGQRGGRR.

Disordered stretches follow at residues 1 to 64 (MDNR…VNIY), 86 to 114 (TGQT…MVDT), and 197 to 226 (TDPQ…GIPH). Positions 33 to 44 (PLAPPHPQPQPP) are enriched in pro residues. Positions 89-103 (TSTSTTSSSSSSSTS) are enriched in low complexity. The 87-residue stretch at 323 to 409 (NTLYVEGLPS…KILRLQFFRN (87 aa)) folds into the RRM domain.

As to expression, isoform 1: Expressed in root meristems, lateral root primordia, root vascular tissues and cotyledon vascular tissues. Isoform 2: Expressed in root meristems, lateral root primordia and root vascular tissues.

The protein resides in the nucleus speckle. Its function is as follows. Alternative splicing (AS) regulator that binds to specific mRNAs and modulates auxin effects on the transcriptome. Displaced from its targets upon binding to AS competitor long non-coding RNA (ASCO-RNA). The chain is Nuclear speckle RNA-binding protein B from Arabidopsis thaliana (Mouse-ear cress).